We begin with the raw amino-acid sequence, 197 residues long: dITP/XTP pyrophosphatase (197 aa).

11–16 contacts substrate; that stretch reads SHNAGK. Mg(2+)-binding residues include Glu42 and Asp71. The active-site Proton acceptor is the Asp71. Substrate-binding positions include Ser72, 155–158, Lys178, and 183–184; these read FGYD and HR.

Belongs to the HAM1 NTPase family. Homodimer. Mg(2+) serves as cofactor.

It carries out the reaction XTP + H2O = XMP + diphosphate + H(+). The catalysed reaction is dITP + H2O = dIMP + diphosphate + H(+). The enzyme catalyses ITP + H2O = IMP + diphosphate + H(+). Functionally, pyrophosphatase that catalyzes the hydrolysis of nucleoside triphosphates to their monophosphate derivatives, with a high preference for the non-canonical purine nucleotides XTP (xanthosine triphosphate), dITP (deoxyinosine triphosphate) and ITP. Seems to function as a house-cleaning enzyme that removes non-canonical purine nucleotides from the nucleotide pool, thus preventing their incorporation into DNA/RNA and avoiding chromosomal lesions. In Pseudomonas aeruginosa (strain ATCC 15692 / DSM 22644 / CIP 104116 / JCM 14847 / LMG 12228 / 1C / PRS 101 / PAO1), this protein is dITP/XTP pyrophosphatase.